A 256-amino-acid polypeptide reads, in one-letter code: NH(3)-dependent NAD(+) synthetase (256 aa).

29 to 36 (GISGGIDS) lines the ATP pocket. Asp35 is a Mg(2+) binding site. Arg115 is a deamido-NAD(+) binding site. Thr135 provides a ligand contact to ATP. Glu140 serves as a coordination point for Mg(2+). Deamido-NAD(+) contacts are provided by Lys148 and Asp155. 2 residues coordinate ATP: Lys164 and Ser186. A deamido-NAD(+)-binding site is contributed by 245 to 246 (HK).

This sequence belongs to the NAD synthetase family. As to quaternary structure, homodimer.

It carries out the reaction deamido-NAD(+) + NH4(+) + ATP = AMP + diphosphate + NAD(+) + H(+). The protein operates within cofactor biosynthesis; NAD(+) biosynthesis; NAD(+) from deamido-NAD(+) (ammonia route): step 1/1. Functionally, catalyzes the ATP-dependent amidation of deamido-NAD to form NAD. Uses ammonia as a nitrogen source. The sequence is that of NH(3)-dependent NAD(+) synthetase from Methanosarcina acetivorans (strain ATCC 35395 / DSM 2834 / JCM 12185 / C2A).